We begin with the raw amino-acid sequence, 163 residues long: Type-2 ice-structuring protein (163 aa).

Residues 1 to 17 form the signal peptide; that stretch reads MLTVSLLVCAMMALTQA. A propeptide spanning residues 18–34 is cleaved from the precursor; sequence NDDKILKGTATEAGPVS. One can recognise a C-type lectin domain in the interval 39 to 163; the sequence is PNCPAGWQPL…SHKSVCAMTF (125 aa). Cystine bridges form between Cys41–Cys52, Cys69–Cys159, Cys103–Cys134, Cys123–Cys145, and Cys135–Cys151.

In terms of processing, the N-terminus is blocked.

It localises to the secreted. Functionally, antifreeze proteins lower the blood freezing point. This chain is Type-2 ice-structuring protein, found in Hemitripterus americanus (Sea raven).